The following is a 61-amino-acid chain: Probable tautomerase SSP1389 (61 aa).

Pro-2 functions as the Proton acceptor; via imino nitrogen in the catalytic mechanism.

This sequence belongs to the 4-oxalocrotonate tautomerase family.

In Staphylococcus saprophyticus subsp. saprophyticus (strain ATCC 15305 / DSM 20229 / NCIMB 8711 / NCTC 7292 / S-41), this protein is Probable tautomerase SSP1389.